Consider the following 72-residue polypeptide: Neuropeptide SIFamide (72 aa).

A signal peptide spans Met1–Ala26. An N-linked (GlcNAc...) asparagine glycan is attached at Asn34. Phenylalanine amide is present on Phe38. Positions Asn42–Lys72 are excised as a propeptide.

Belongs to the FARP (FMRFamide related peptide) family. In terms of tissue distribution, strongly expressed in two pairs of neurons in the pars intercerebralis (at protein level).

It localises to the secreted. In terms of biological role, ligand for the neuropeptide SIFamide receptor. Modulates sexual behavior by negatively regulating female receptivity to male courtship and by playing a role in male sex discrimination. Also involved in promoting sleep. The protein is Neuropeptide SIFamide of Drosophila melanogaster (Fruit fly).